The chain runs to 398 residues: Succinate--CoA ligase [ADP-forming] subunit beta (398 aa).

One can recognise an ATP-grasp domain in the interval 9-253 (KEILASYGVR…IREENPIEVE (245 aa)). ATP contacts are provided by residues Lys-50, 57–59 (GRG), Val-106, and Glu-116. The Mg(2+) site is built by Asn-208 and Asp-222. Substrate contacts are provided by residues Asn-273 and 330–332 (GIV).

It belongs to the succinate/malate CoA ligase beta subunit family. In terms of assembly, heterotetramer of two alpha and two beta subunits. Mg(2+) serves as cofactor.

The enzyme catalyses succinate + ATP + CoA = succinyl-CoA + ADP + phosphate. It carries out the reaction GTP + succinate + CoA = succinyl-CoA + GDP + phosphate. It functions in the pathway carbohydrate metabolism; tricarboxylic acid cycle; succinate from succinyl-CoA (ligase route): step 1/1. In terms of biological role, succinyl-CoA synthetase functions in the citric acid cycle (TCA), coupling the hydrolysis of succinyl-CoA to the synthesis of either ATP or GTP and thus represents the only step of substrate-level phosphorylation in the TCA. The beta subunit provides nucleotide specificity of the enzyme and binds the substrate succinate, while the binding sites for coenzyme A and phosphate are found in the alpha subunit. This Flavobacterium psychrophilum (strain ATCC 49511 / DSM 21280 / CIP 103535 / JIP02/86) protein is Succinate--CoA ligase [ADP-forming] subunit beta.